Reading from the N-terminus, the 220-residue chain is Nicotinamidase (220 aa).

Aspartate 11 is an active-site residue. Aspartate 53, histidine 55, and histidine 94 together coordinate Zn(2+). Lysine 119 is an active-site residue. Catalysis depends on cysteine 163, which acts as the Nucleophile.

It belongs to the isochorismatase family.

Its subcellular location is the cytoplasm. The protein resides in the nucleus. It localises to the peroxisome. The enzyme catalyses nicotinamide + H2O = nicotinate + NH4(+). Its pathway is cofactor biosynthesis; nicotinate biosynthesis; nicotinate from nicotinamide: step 1/1. Its function is as follows. Catalyzes the deamidation of nicotinamide, an early step in the NAD(+) salvage pathway. The sequence is that of Nicotinamidase (pnc1) from Schizosaccharomyces pombe (strain 972 / ATCC 24843) (Fission yeast).